Here is a 269-residue protein sequence, read N- to C-terminus: Phosphoribosylformylglycinamidine synthase subunit PurQ (269 aa).

A Glutamine amidotransferase type-1 domain is found at 5-262; it reads VLVMSGYGIN…IESNLQIFKN (258 aa). The active-site Nucleophile is the Cys-95. Catalysis depends on residues His-222, Glu-224, and Glu-232.

In terms of assembly, part of the FGAM synthase complex composed of 1 PurL, 1 PurQ and 2 PurS subunits.

The protein resides in the cytoplasm. The catalysed reaction is N(2)-formyl-N(1)-(5-phospho-beta-D-ribosyl)glycinamide + L-glutamine + ATP + H2O = 2-formamido-N(1)-(5-O-phospho-beta-D-ribosyl)acetamidine + L-glutamate + ADP + phosphate + H(+). It catalyses the reaction L-glutamine + H2O = L-glutamate + NH4(+). It functions in the pathway purine metabolism; IMP biosynthesis via de novo pathway; 5-amino-1-(5-phospho-D-ribosyl)imidazole from N(2)-formyl-N(1)-(5-phospho-D-ribosyl)glycinamide: step 1/2. Its function is as follows. Part of the phosphoribosylformylglycinamidine synthase complex involved in the purines biosynthetic pathway. Catalyzes the ATP-dependent conversion of formylglycinamide ribonucleotide (FGAR) and glutamine to yield formylglycinamidine ribonucleotide (FGAM) and glutamate. The FGAM synthase complex is composed of three subunits. PurQ produces an ammonia molecule by converting glutamine to glutamate. PurL transfers the ammonia molecule to FGAR to form FGAM in an ATP-dependent manner. PurS interacts with PurQ and PurL and is thought to assist in the transfer of the ammonia molecule from PurQ to PurL. In Methanococcus maripaludis (strain C5 / ATCC BAA-1333), this protein is Phosphoribosylformylglycinamidine synthase subunit PurQ.